The primary structure comprises 1389 residues: DNA-directed RNA polymerase subunit beta'' (1389 aa).

4 residues coordinate Zn(2+): Cys224, Cys295, Cys302, and Cys305.

Belongs to the RNA polymerase beta' chain family. RpoC2 subfamily. In plastids the minimal PEP RNA polymerase catalytic core is composed of four subunits: alpha, beta, beta', and beta''. When a (nuclear-encoded) sigma factor is associated with the core the holoenzyme is formed, which can initiate transcription. It depends on Zn(2+) as a cofactor.

It is found in the plastid. The protein resides in the chloroplast. It catalyses the reaction RNA(n) + a ribonucleoside 5'-triphosphate = RNA(n+1) + diphosphate. DNA-dependent RNA polymerase catalyzes the transcription of DNA into RNA using the four ribonucleoside triphosphates as substrates. This chain is DNA-directed RNA polymerase subunit beta'', found in Morus indica (Mulberry).